The chain runs to 294 residues: MSAHFRSVALIGKYQSADVAESVFAIANHLRQRGLVVWIEQGTASSIGGAADFTVASYEEIGSRAELAVVIGGDGTMLNAARRLAEHQVPLVGVNLGRLGFLTDVARSDALQRLEEIVDGRYSEESRFMLDAEVLRSGERVFQTLALNDVVVNKGDLGRMIEFDLSIDGEFVYTQRSDGMIISTPTGSTAYALSANGPILHPGVGGIALVPLCPHALTARPVTLPDTCRIEIRLLPPHDASIHFDGQARFDARAGDCVRLGRSPLAVRLLHPEGYNYYAMLREKLHWSAVPRHN.

Residue D74 is the Proton acceptor of the active site. NAD(+) is bound by residues 74–75, 148–149, R159, R176, D178, 189–194, and Q247; these read DG, ND, and TAYALS.

It belongs to the NAD kinase family. Requires a divalent metal cation as cofactor.

The protein resides in the cytoplasm. The enzyme catalyses NAD(+) + ATP = ADP + NADP(+) + H(+). Functionally, involved in the regulation of the intracellular balance of NAD and NADP, and is a key enzyme in the biosynthesis of NADP. Catalyzes specifically the phosphorylation on 2'-hydroxyl of the adenosine moiety of NAD to yield NADP. This chain is NAD kinase, found in Azoarcus sp. (strain BH72).